Reading from the N-terminus, the 118-residue chain is Large ribosomal subunit protein bL19 (118 aa).

It belongs to the bacterial ribosomal protein bL19 family.

Functionally, this protein is located at the 30S-50S ribosomal subunit interface and may play a role in the structure and function of the aminoacyl-tRNA binding site. The sequence is that of Large ribosomal subunit protein bL19 from Parafrankia sp. (strain EAN1pec).